An 871-amino-acid polypeptide reads, in one-letter code: Transient receptor potential cation channel subfamily V member 4 (871 aa).

A disordered region spans residues 1-68; it reads MADSSEGPRA…GPGDGRPNLR (68 aa). Over 1–469 the chain is Cytoplasmic; sequence MADSSEGPRA…RDKWRKFGAV (469 aa). A Phosphotyrosine modification is found at Tyr110. ATP is bound by residues Lys192, Lys197, Asn201, 236–239, and Arg248; that span reads YRGQ. ANK repeat units lie at residues 237 to 266 and 284 to 313; these read RGQTALHIAIERRCKHYVELLVAQGADVHA and FGELPLSLAACTNQPHIVNYLTENPHKKAD. Residue 249-251 participates in a 1,2-diacyl-sn-glycero-3-phospho-(1D-myo-inositol-4,5-bisphosphate) binding; the sequence is RCK. Tyr253 is subject to Phosphotyrosine. A 1,2-diacyl-sn-glycero-3-phospho-(1D-myo-inositol-4,5-bisphosphate)-binding positions include 296–299 and Lys344; that span reads NQPH. Residues 369–398 form an ANK 3 repeat; the sequence is DGLSPLMMAAKTGKIGIFQHIIRREVTDED. A helical transmembrane segment spans residues 470–490; it reads SFYINVVSYLCAMVIFTLTAY. Topologically, residues 491 to 507 are extracellular; that stretch reads YQPLEGTPPYPYRTTVD. The chain crosses the membrane as a helical span at residues 508 to 534; sequence YLRLAGEVITLFTGVLFFFTNIKDLFM. Topologically, residues 535–547 are cytoplasmic; the sequence is KKCPGVNSLFIDG. The chain crosses the membrane as a helical span at residues 548-568; the sequence is SFQLLYFIYSVLVIVSAALYL. The Extracellular segment spans residues 569-572; it reads AGIE. The helical transmembrane segment at 573–593 threads the bilayer; the sequence is AYLAVMVFALVLGWMNALYFT. The Cytoplasmic portion of the chain corresponds to 594 to 608; sequence RGLKLTGTYSIMIQK. Residues 609 to 636 traverse the membrane as a helical segment; the sequence is ILFKDLFRFLLVYLLFMIGYASALVSLL. The Extracellular portion of the chain corresponds to 637–665; the sequence is NPCANMKVCNEDQTNCTVPTYPSCRDSET. Positions 666–685 form an intramembrane region, pore-forming; sequence FSTFLLDLFKLTIGMGDLEM. The short motif at 679–682 is the Selectivity filter element; sequence GMGD. Residue Asp682 participates in Ca(2+) binding. At 686-693 the chain is on the extracellular side; the sequence is LSSTKYPV. The helical transmembrane segment at 694–722 threads the bilayer; the sequence is VFIILLVTYIILTFVLLLNMLIALMGETV. Residues 723–871 lie on the Cytoplasmic side of the membrane; that stretch reads GQVSKESKHI…RKWRTDDAPL (149 aa). The residue at position 805 (Tyr805) is a Phosphotyrosine. The tract at residues 812-831 is interaction with calmodulin and ITPR3; sequence HTVGRLRRDRWSSVVPRVVE. A Phosphoserine modification is found at Ser824. A disordered region spans residues 849–871; sequence GNPRCDGHQQGYPRKWRTDDAPL.

The protein belongs to the transient receptor (TC 1.A.4) family. TrpV subfamily. TRPV4 sub-subfamily. As to quaternary structure, homotetramer. Self-associates in an isoform-specific manner. Isoform 1 and isoform 5 can oligomerize, but isoform 2, isoform 4 and isoform 6 cannot oligomerize. Interacts with calmodulin. Interacts with Map7 and Src family Tyr protein kinases LYN, SRC, FYN, HCK, LCK and YES. Interacts with CTNNB1. The TRPV4 and CTNNB1 complex can interact with CDH1. Interacts with PACSIN1, PACSIN2 and PACSIN3 (via SH3 domain). Part of a complex containing MLC1, AQP4, HEPACAM and ATP1B1. Interacts with ITPR3. Interacts with AQP5; the interaction is probably indirect and regulates TRPV4 activation by hypotonicity. Interacts with ANO1. Interacts (via C-terminus) with PKD2 (via C-terminus). Interacts with DDX3X; this interaction is decreased when the channel is activated. In terms of processing, N-glycosylated. As to expression, found in the synoviocytes from patients with (RA) and without (CTR) rheumatoid arthritis (at protein level).

Its subcellular location is the cell membrane. It localises to the apical cell membrane. The protein localises to the cell junction. The protein resides in the adherens junction. It is found in the cell projection. Its subcellular location is the cilium. It localises to the endoplasmic reticulum. It carries out the reaction Ca(2+)(in) = Ca(2+)(out). Its activity is regulated as follows. Channel activation is inhibited by binding to phosphatidylinositol-4,5-bisphosphate, and to a much lesser degree by phosphatidylinositol-3,4,5-trisphosphate. Not inhibited by phosphatidylinositol-3,4-bisphosphate and phosphatidylinositol-3,5-bisphosphate. Its function is as follows. Non-selective calcium permeant cation channel involved in osmotic sensitivity and mechanosensitivity. Activation by exposure to hypotonicity within the physiological range exhibits an outward rectification. Also activated by heat, low pH, citrate and phorbol esters. Increase of intracellular Ca(2+) potentiates currents. Channel activity seems to be regulated by a calmodulin-dependent mechanism with a negative feedback mechanism. Promotes cell-cell junction formation in skin keratinocytes and plays an important role in the formation and/or maintenance of functional intercellular barriers. Acts as a regulator of intracellular Ca(2+) in synoviocytes. Plays an obligatory role as a molecular component in the nonselective cation channel activation induced by 4-alpha-phorbol 12,13-didecanoate and hypotonic stimulation in synoviocytes and also regulates production of IL-8. Together with PKD2, forms mechano- and thermosensitive channels in cilium. Negatively regulates expression of PPARGC1A, UCP1, oxidative metabolism and respiration in adipocytes. Regulates expression of chemokines and cytokines related to pro-inflammatory pathway in adipocytes. Together with AQP5, controls regulatory volume decrease in salivary epithelial cells. Required for normal development and maintenance of bone and cartilage. In its inactive state, may sequester DDX3X at the plasma membrane. When activated, the interaction between both proteins is affected and DDX3X relocalizes to the nucleus. In neurons of the central nervous system, could play a role in triggering voluntary water intake in response to increased sodium concentration in body fluid. In terms of biological role, non-selective calcium permeant cation channel involved in osmotic sensitivity and mechanosensitivity. Activation by exposure to hypotonicity within the physiological range exhibits an outward rectification. Also activated by phorbol esters. Has the same channel activity as isoform 1, and is activated by the same stimuli. Lacks channel activity, due to impaired oligomerization and intracellular retention. Functionally, (Microbial infection) Facilitates hepatitis C virus (HCV) replication, possibly through its action on DDX3X. Its function is as follows. (Microbial infection) Facilitates Dengue virus (DENV) replication, possibly through its action on DDX3X. In terms of biological role, (Microbial infection) Facilitates Zika virus (ZIKV) replication, possibly through its action on DDX3X. The sequence is that of Transient receptor potential cation channel subfamily V member 4 (TRPV4) from Homo sapiens (Human).